The primary structure comprises 214 residues: ATP-dependent Clp protease proteolytic subunit (214 aa).

The Nucleophile role is filled by Ser-106. His-131 is a catalytic residue.

This sequence belongs to the peptidase S14 family. Fourteen ClpP subunits assemble into 2 heptameric rings which stack back to back to give a disk-like structure with a central cavity, resembling the structure of eukaryotic proteasomes.

Its subcellular location is the cytoplasm. It carries out the reaction Hydrolysis of proteins to small peptides in the presence of ATP and magnesium. alpha-casein is the usual test substrate. In the absence of ATP, only oligopeptides shorter than five residues are hydrolyzed (such as succinyl-Leu-Tyr-|-NHMec, and Leu-Tyr-Leu-|-Tyr-Trp, in which cleavage of the -Tyr-|-Leu- and -Tyr-|-Trp bonds also occurs).. Its function is as follows. Cleaves peptides in various proteins in a process that requires ATP hydrolysis. Has a chymotrypsin-like activity. Plays a major role in the degradation of misfolded proteins. This Rhodopseudomonas palustris (strain BisB5) protein is ATP-dependent Clp protease proteolytic subunit.